We begin with the raw amino-acid sequence, 218 residues long: Phosphoglycolate phosphatase (218 aa).

Residue D7 is the Nucleophile of the active site. Residues D7, D9, and D167 each contribute to the Mg(2+) site.

This sequence belongs to the HAD-like hydrolase superfamily. CbbY/CbbZ/Gph/YieH family. It depends on Mg(2+) as a cofactor.

It catalyses the reaction 2-phosphoglycolate + H2O = glycolate + phosphate. It participates in organic acid metabolism; glycolate biosynthesis; glycolate from 2-phosphoglycolate: step 1/1. Its function is as follows. Specifically catalyzes the dephosphorylation of 2-phosphoglycolate. Is involved in the dissimilation of the intracellular 2-phosphoglycolate formed during the DNA repair of 3'-phosphoglycolate ends, a major class of DNA lesions induced by oxidative stress. This is Phosphoglycolate phosphatase from Cereibacter sphaeroides (Rhodobacter sphaeroides).